The sequence spans 276 residues: Thymidylate synthase (276 aa).

Residue Arg-26 coordinates dUMP. His-56 is a (6R)-5,10-methylene-5,6,7,8-tetrahydrofolate binding site. 131-132 (RR) serves as a coordination point for dUMP. Catalysis depends on Cys-151, which acts as the Nucleophile. DUMP-binding positions include 178-181 (RSAD), Asn-189, and 219-221 (HIY). Position 181 (Asp-181) interacts with (6R)-5,10-methylene-5,6,7,8-tetrahydrofolate. Ala-275 provides a ligand contact to (6R)-5,10-methylene-5,6,7,8-tetrahydrofolate.

The protein belongs to the thymidylate synthase family. Bacterial-type ThyA subfamily. As to quaternary structure, homodimer.

It localises to the cytoplasm. It catalyses the reaction dUMP + (6R)-5,10-methylene-5,6,7,8-tetrahydrofolate = 7,8-dihydrofolate + dTMP. It functions in the pathway pyrimidine metabolism; dTTP biosynthesis. Its function is as follows. Catalyzes the reductive methylation of 2'-deoxyuridine-5'-monophosphate (dUMP) to 2'-deoxythymidine-5'-monophosphate (dTMP) while utilizing 5,10-methylenetetrahydrofolate (mTHF) as the methyl donor and reductant in the reaction, yielding dihydrofolate (DHF) as a by-product. This enzymatic reaction provides an intracellular de novo source of dTMP, an essential precursor for DNA biosynthesis. The polypeptide is Thymidylate synthase (Polaromonas naphthalenivorans (strain CJ2)).